A 587-amino-acid chain; its full sequence is MTSSIECKNFLRSLQLLNLLIKIGVQNLIVCPGSRSAPLAIAAGELNKLGLVNIFNSIDERSAGFHSLGISAASGNLSLVITTSGTAVSNLLPAAVEADRSCKGIIFLTADRPLRLKDCGSNQTVNQEDFLSSVCRRVLSTNLNGLHETQENEILNLVRIIEKQISTFPGPIHLNIPIDKPLGISFLNKKNVLEVFKRIYLKKKYIFQEFEIKSDKKKFLEISKSLNLDESGIILVGPYQGSVNDLTSFNKSLERLQEITGWPVFADPVSGVYSDLRGLVVNWELVLRKNKNSINCHQLLRLGPMSSSIDLEKFLINFEGIQILIKEKNYRKLDPIKKSFEYDFGLSNFTTLLIEELSINEKNKKSLIPMALDLIEEGEQIKEILKEKITQDNQITEYMLANRVPKLWPAENPIMLSASSPIRDWLTFSENGTLTRNCFSFRGASGIDGTLSLAVGIARIKNPLLLVTGDLAFIHDINGWLIENSVDMNLTILLIDNNGGNIFNRIYKENLKEDELRKLFLMPKEINWPKLAEGYQVNFKNVANFKKLREALDWSISIQKSVIIKVDIDPENEIFEKNALLEKIIGS.

The protein belongs to the TPP enzyme family. MenD subfamily. As to quaternary structure, homodimer. The cofactor is Mg(2+). Mn(2+) is required as a cofactor. Requires thiamine diphosphate as cofactor.

It catalyses the reaction isochorismate + 2-oxoglutarate + H(+) = 5-enolpyruvoyl-6-hydroxy-2-succinyl-cyclohex-3-ene-1-carboxylate + CO2. It participates in quinol/quinone metabolism; 1,4-dihydroxy-2-naphthoate biosynthesis; 1,4-dihydroxy-2-naphthoate from chorismate: step 2/7. The protein operates within cofactor biosynthesis; phylloquinone biosynthesis. Catalyzes the thiamine diphosphate-dependent decarboxylation of 2-oxoglutarate and the subsequent addition of the resulting succinic semialdehyde-thiamine pyrophosphate anion to isochorismate to yield 2-succinyl-5-enolpyruvyl-6-hydroxy-3-cyclohexene-1-carboxylate (SEPHCHC). This Prochlorococcus marinus (strain MIT 9215) protein is 2-succinyl-5-enolpyruvyl-6-hydroxy-3-cyclohexene-1-carboxylate synthase.